A 355-amino-acid polypeptide reads, in one-letter code: uncharacterized protein (355 aa).

An N-terminal signal peptide occupies residues 1–21 (MQKKVLFNDIVFVCFPITDNG). N-linked (GlcNAc...) asparagine; by host glycosylation is found at N20, N78, N87, N156, N159, and N274. Residues 22–331 (SIIISDIGYS…SSTSFFSRYG (310 aa)) lie on the Virion surface side of the membrane. The tract at residues 288 to 317 (GSKSTPNGPNGPTPTPSNGPNGPTPVPGIP) is disordered. A compositionally biased stretch (pro residues) spans 296 to 317 (PNGPTPTPSNGPNGPTPVPGIP). An N-linked (GlcNAc...) asparagine; by host glycan is attached at N320. A helical transmembrane segment spans residues 332 to 352 (LWIIIAIILLIVIISAVGIYF). At 353–355 (YLR) the chain is on the intravirion side.

It is found in the host membrane. The protein localises to the virion. This is an uncharacterized protein from Acanthamoeba polyphaga mimivirus (APMV).